We begin with the raw amino-acid sequence, 202 residues long: Holliday junction branch migration complex subunit RuvA (202 aa).

A domain I region spans residues 1-64 (MFAYIRGRLE…EDVISLYGFL (64 aa)). The domain II stretch occupies residues 65 to 143 (TQEELNVFEL…KEQLTEYAQS (79 aa)). Residues 144–152 (EEGGKVLDT) are flexible linker. Residues 152-202 (TDSSKMAEAVSALMVLGYSPAEANKAVSAVYREDMDIETIIKNALKGLARP) are domain III.

Belongs to the RuvA family. Homotetramer. Forms an RuvA(8)-RuvB(12)-Holliday junction (HJ) complex. HJ DNA is sandwiched between 2 RuvA tetramers; dsDNA enters through RuvA and exits via RuvB. An RuvB hexamer assembles on each DNA strand where it exits the tetramer. Each RuvB hexamer is contacted by two RuvA subunits (via domain III) on 2 adjacent RuvB subunits; this complex drives branch migration. In the full resolvosome a probable DNA-RuvA(4)-RuvB(12)-RuvC(2) complex forms which resolves the HJ.

It is found in the cytoplasm. The RuvA-RuvB-RuvC complex processes Holliday junction (HJ) DNA during genetic recombination and DNA repair, while the RuvA-RuvB complex plays an important role in the rescue of blocked DNA replication forks via replication fork reversal (RFR). RuvA specifically binds to HJ cruciform DNA, conferring on it an open structure. The RuvB hexamer acts as an ATP-dependent pump, pulling dsDNA into and through the RuvAB complex. HJ branch migration allows RuvC to scan DNA until it finds its consensus sequence, where it cleaves and resolves the cruciform DNA. This is Holliday junction branch migration complex subunit RuvA from Acetivibrio thermocellus (strain ATCC 27405 / DSM 1237 / JCM 9322 / NBRC 103400 / NCIMB 10682 / NRRL B-4536 / VPI 7372) (Clostridium thermocellum).